A 273-amino-acid chain; its full sequence is Putative phosphoenolpyruvate synthase regulatory protein (273 aa).

Residue 153-160 participates in ADP binding; that stretch reads GVSRCGKT.

The protein belongs to the pyruvate, phosphate/water dikinase regulatory protein family. PSRP subfamily.

It catalyses the reaction [pyruvate, water dikinase] + ADP = [pyruvate, water dikinase]-phosphate + AMP + H(+). The catalysed reaction is [pyruvate, water dikinase]-phosphate + phosphate + H(+) = [pyruvate, water dikinase] + diphosphate. Bifunctional serine/threonine kinase and phosphorylase involved in the regulation of the phosphoenolpyruvate synthase (PEPS) by catalyzing its phosphorylation/dephosphorylation. The chain is Putative phosphoenolpyruvate synthase regulatory protein from Sodalis glossinidius (strain morsitans).